The chain runs to 837 residues: Protein translocase subunit SecA 1 (837 aa).

ATP is bound by residues glutamine 85, 103–107 (GEGKT), and aspartate 493. 4 residues coordinate Zn(2+): cysteine 821, cysteine 823, cysteine 832, and histidine 833.

It belongs to the SecA family. As to quaternary structure, monomer and homodimer. Part of the essential Sec protein translocation apparatus which comprises SecA, SecYEG and auxiliary proteins SecDF. Other proteins may also be involved. Requires Zn(2+) as cofactor.

Its subcellular location is the cell membrane. It localises to the cytoplasm. The enzyme catalyses ATP + H2O + cellular proteinSide 1 = ADP + phosphate + cellular proteinSide 2.. In terms of biological role, part of the Sec protein translocase complex. Interacts with the SecYEG preprotein conducting channel. Has a central role in coupling the hydrolysis of ATP to the transfer of proteins into and across the cell membrane, serving as an ATP-driven molecular motor driving the stepwise translocation of polypeptide chains across the membrane. This is Protein translocase subunit SecA 1 from Streptococcus pneumoniae serotype 4 (strain ATCC BAA-334 / TIGR4).